The following is a 201-amino-acid chain: Imidazoleglycerol-phosphate dehydratase (201 aa).

Belongs to the imidazoleglycerol-phosphate dehydratase family.

Its subcellular location is the cytoplasm. It carries out the reaction D-erythro-1-(imidazol-4-yl)glycerol 3-phosphate = 3-(imidazol-4-yl)-2-oxopropyl phosphate + H2O. The protein operates within amino-acid biosynthesis; L-histidine biosynthesis; L-histidine from 5-phospho-alpha-D-ribose 1-diphosphate: step 6/9. This chain is Imidazoleglycerol-phosphate dehydratase, found in Synechococcus sp. (strain CC9311).